The chain runs to 119 residues: Beta-2-microglobulin (119 aa).

Positions 1 to 20 (MARSVVVSLFVLLALAGLEA) are cleaved as a signal peptide. Residues 25-114 (PKIQVYSRHP…VTFQTPKTVK (90 aa)) form the Ig-like C1-type domain.

This sequence belongs to the beta-2-microglobulin family. Heterodimer of an alpha chain and a beta chain. Beta-2-microglobulin is the beta-chain of major histocompatibility complex class I molecules.

Its subcellular location is the secreted. In terms of biological role, component of the class I major histocompatibility complex (MHC). Involved in the presentation of peptide antigens to the immune system. The polypeptide is Beta-2-microglobulin (B2M) (Brachyteles arachnoides (Southern muriqui)).